We begin with the raw amino-acid sequence, 606 residues long: MNLFSSLTLVTLILLTMPIAAINFNTHKFTNYPLYVKTTISCAFITSMIPTMMFIHTGQEMIISNWHWLTIQTLKLSLSFKMDFFSMMFVPVALFVTWSIMEFSMWYMHSDPNINQFFKYLLLFLITMLILVTANNLFQLFIGWEGVGIMSFLLIGWWYGRTDANTAALQAILYNRIGDIGFILAMAWFLINLNTWDLQQIFMLNPNDSNLPLMGLILAATGKSAQFGLHPWLPSAMEGPTPVSALLHSSTMVVAGIFLLIRFYPLTENNKFGQSIMLCLGAMTTLFTAMCALTQNDIKKIIAFSTSSQLGLMMVTIGINQPHLAFLHICTHAFFKAMLFMCSGSIIHSLNDEQDIRKMGGLFKAMPFTTTALIIGSLALTGMPFLTGFYSKDLIIESANTSYTNAWALLMTLVATSFTAIYSTRIIFFALLGQPRFPTLININENNPFLINSIKRLLIGSLFAGFIISNNIPPMTIPQMTMPHYLKMTALTVTILGFILALEISNTTHYLKFNYPSNTFKFSNLLGYYPTIMHRLTPYMNLTMSQKSASSLLDLIWLETILPKTISLAQMKMSTTITSQKGLIKLYFLSFLITILISTTLLNFHE.

The next 16 membrane-spanning stretches (helical) occupy residues 4–24 (FSSL…AINF), 43–63 (AFIT…EMII), 84–104 (FFSM…MEFS), 114–134 (INQF…LVTA), 140–160 (LFIG…WWYG), 171–191 (AILY…WFLI), 213–233 (LMGL…HPWL), 241–261 (TPVS…FLLI), 272–292 (FGQS…AMCA), 301–320 (IIAF…IGIN), 325–347 (AFLH…GSII), 366–386 (MPFT…MPFL), 413–433 (LVAT…ALLG), 457–477 (LLIG…PMTI), 485–505 (YLKM…LEIS), and 582–602 (GLIK…TTLL).

It belongs to the complex I subunit 5 family. Core subunit of respiratory chain NADH dehydrogenase (Complex I) which is composed of 45 different subunits.

It is found in the mitochondrion inner membrane. It catalyses the reaction a ubiquinone + NADH + 5 H(+)(in) = a ubiquinol + NAD(+) + 4 H(+)(out). In terms of biological role, core subunit of the mitochondrial membrane respiratory chain NADH dehydrogenase (Complex I) which catalyzes electron transfer from NADH through the respiratory chain, using ubiquinone as an electron acceptor. Essential for the catalytic activity and assembly of complex I. The protein is NADH-ubiquinone oxidoreductase chain 5 (MT-ND5) of Ovis aries (Sheep).